Consider the following 258-residue polypeptide: uncharacterized protein (258 aa).

The region spanning 3 to 58 is the HTH deoR-type domain; sequence VAERQQKIVEIVNMRSSIRVSELSDIFSVTEETIRRDLEKLEKEHKLSRSHGGAVS. The segment at residues 20 to 39 is a DNA-binding region (H-T-H motif); the sequence is IRVSELSDIFSVTEETIRRD.

This is an uncharacterized protein from Bacillus subtilis (strain 168).